The chain runs to 233 residues: Preprocaerulein type-4 (233 aa).

The signal sequence occupies residues 1-26; that stretch reads MFKGILLCVLFAVLSANPLSQPEGFA. Residues 27–72 constitute a propeptide that is removed on maturation; the sequence is DEERDVRGLASLLGKALKATLKIGTHFLGGAPQQREANDERRFADG. Residue Gln-73 is modified to Pyrrolidone carboxylic acid. Tyr-76 carries the post-translational modification Sulfotyrosine. Phe-82 is modified (phenylalanine amide). A propeptide spanning residues 86 to 87 is cleaved from the precursor; that stretch reads DG. Gln-88 bears the Pyrrolidone carboxylic acid mark. Residue Tyr-91 is modified to Sulfotyrosine. Phe-97 is modified (phenylalanine amide). A propeptide spanning residues 101 to 151 is cleaved from the precursor; the sequence is DDEDDVHERDVRGFGSFLGKALKAALKIGANALGGAPQQREANDERRFADG. At Gln-152 the chain carries Pyrrolidone carboxylic acid. Tyr-155 carries the sulfotyrosine modification. Phe-161 carries the post-translational modification Phenylalanine amide. The propeptide occupies 165 to 215; that stretch reads DDEDDVNERDVRGFGSFLGKALKAALKIGANALGGSPQQREANDERRFADG. Residues 197–233 form a disordered region; sequence LGGSPQQREANDERRFADGQQDYTGWMDFGRRNGEDD. The residue at position 216 (Gln-216) is a Pyrrolidone carboxylic acid. At Tyr-219 the chain carries Sulfotyrosine. Phe-225 carries the phenylalanine amide modification. The propeptide occupies 229-233; the sequence is NGEDD.

It belongs to the gastrin/cholecystokinin family. Expressed by the skin glands.

It is found in the secreted. In terms of biological role, the pharmacological activities of caerulein are quite similar to the physiological activities of gastrin and related peptides. In Xenopus laevis (African clawed frog), this protein is Preprocaerulein type-4.